A 119-amino-acid polypeptide reads, in one-letter code: Fluoride-specific ion channel FluC 1 (119 aa).

4 consecutive transmembrane segments (helical) span residues 6-26 (VALVAGGGFAGALCRHGIAVV), 31-51 (FPWGTLVVNVAGAFLLGAIVY), 66-86 (VVATGFLSSFTTYSTFAGETI), and 91-111 (RLAALNVVGNYALGFVAVLVA).

The protein belongs to the fluoride channel Fluc/FEX (TC 1.A.43) family.

Its subcellular location is the cell membrane. The enzyme catalyses fluoride(in) = fluoride(out). Fluoride-specific ion channel. Important for reducing fluoride concentration in the cell, thus reducing its toxicity. This is Fluoride-specific ion channel FluC 1 from Natronomonas pharaonis (strain ATCC 35678 / DSM 2160 / CIP 103997 / JCM 8858 / NBRC 14720 / NCIMB 2260 / Gabara) (Halobacterium pharaonis).